The primary structure comprises 421 residues: UPF0229 protein lpl2726 (421 aa).

The tract at residues 83 to 110 (IAGDRIKRPGGGGSGGAGGNASDSGEGE) is disordered. A compositionally biased stretch (gly residues) spans 91–101 (PGGGGSGGAGG).

Belongs to the UPF0229 family.

This chain is UPF0229 protein lpl2726, found in Legionella pneumophila (strain Lens).